A 182-amino-acid polypeptide reads, in one-letter code: UPF0148 protein VNG_2366C (182 aa).

The segment at 1 to 162 (MSNTDDGFDK…RASDADDPRT (162 aa)) is disordered. Composition is skewed to basic and acidic residues over residues 7-33 (GFDKEAAREELREKYNADQQDREETAR) and 47-62 (DHCDRCGTPLFRHDGE). A compositionally biased stretch (low complexity) spans 105-122 (PDTSSSTAAATDDVPTAA). A compositionally biased stretch (basic and acidic residues) spans 153 to 162 (RASDADDPRT).

The protein belongs to the UPF0148 family.

The sequence is that of UPF0148 protein VNG_2366C from Halobacterium salinarum (strain ATCC 700922 / JCM 11081 / NRC-1) (Halobacterium halobium).